A 64-amino-acid polypeptide reads, in one-letter code: Potassium channel toxin alpha-KTx J123 (64 aa).

A signal peptide spans 1–21 (MNKVYLVAVLVLFLALTINES). 3 disulfides stabilise this stretch: Cys30-Cys52, Cys37-Cys60, and Cys41-Cys62.

This sequence belongs to the short scorpion toxin superfamily. Potassium channel inhibitor family. Alpha-KTx 11 subfamily. In terms of tissue distribution, expressed by the venom gland.

The protein localises to the secreted. Its function is as follows. This recombinant toxin inhibits mammalian voltage-gated potassium channels Kv1.3/KCNA3 (IC(50)=0.79 nM) and Kv1.2/KCNA2 (IC(50)=26.4 nM). This chain is Potassium channel toxin alpha-KTx J123, found in Olivierus martensii (Manchurian scorpion).